Reading from the N-terminus, the 246-residue chain is MSRGSGAGYDRHITIFSPEGRLFQVEYAFKAVKTAGITSIGVRGKDSVCVVTQKKVPDKLLDQSSVTHLFPITKYIGLVATGITADARSLVQQARNQAAEFRFTYGYEMPVDILAKWIADKSQVYTQHAYMRPLGVVAMVMGVDEENGPLLYKCDPAGHFYGHKATSAGMKEQEAVNFLEKKMKENPSFTFDETVQTAISALQSVLQEDFKATEIEVGVVRAENPEFRALTTEEIEEHLTAISERD.

It belongs to the peptidase T1A family. In terms of assembly, component of the 20S core complex of the 26S proteasome. The 26S proteasome is composed of a core protease (CP), known as the 20S proteasome, capped at one or both ends by the 19S regulatory particle (RP/PA700). The 20S proteasome core is composed of 28 subunits that are arranged in four stacked rings, resulting in a barrel-shaped structure. The two end rings are each formed by seven alpha subunits, and the two central rings are each formed by seven beta subunits. The catalytic chamber with the active sites is on the inside of the barrel. In terms of tissue distribution, ubiquitous low levels, higher expression in siliques and flowers.

Its subcellular location is the cytoplasm. The protein localises to the nucleus. The proteasome is a multicatalytic proteinase complex which is characterized by its ability to cleave peptides with Arg, Phe, Tyr, Leu, and Glu adjacent to the leaving group at neutral or slightly basic pH. The proteasome has an ATP-dependent proteolytic activity. This chain is Proteasome subunit alpha type-6-A (PAA1), found in Arabidopsis thaliana (Mouse-ear cress).